Reading from the N-terminus, the 338-residue chain is Electron transfer flavoprotein subunit alpha (338 aa).

275 to 303 (IYIACAISGAIQPLAGMTGSDCIIAINKD) contributes to the FAD binding site.

It belongs to the ETF alpha-subunit/FixB family. In terms of assembly, heterodimer of an alpha and a beta subunit. It depends on FAD as a cofactor.

The electron transfer flavoprotein serves as a specific electron acceptor for other dehydrogenases. It transfers the electrons to the main respiratory chain via ETF-ubiquinone oxidoreductase (ETF dehydrogenase). In Megasphaera elsdenii, this protein is Electron transfer flavoprotein subunit alpha (etfA).